Reading from the N-terminus, the 232-residue chain is Large ribosomal subunit protein uL1 (232 aa).

This sequence belongs to the universal ribosomal protein uL1 family. Part of the 50S ribosomal subunit.

Functionally, binds directly to 23S rRNA. The L1 stalk is quite mobile in the ribosome, and is involved in E site tRNA release. Protein L1 is also a translational repressor protein, it controls the translation of the L11 operon by binding to its mRNA. The polypeptide is Large ribosomal subunit protein uL1 (Xanthomonas oryzae pv. oryzae (strain MAFF 311018)).